Here is a 279-residue protein sequence, read N- to C-terminus: Biotin synthase (279 aa).

Residues 1-228 form the Radical SAM core domain; sequence MKDIFLCSIC…SARLMIAGGR (228 aa). [4Fe-4S] cluster is bound by residues Cys17, Cys21, and Cys24. [2Fe-2S] cluster is bound by residues Cys61, Cys96, Cys154, and Arg221.

The protein belongs to the radical SAM superfamily. Biotin synthase family. Homodimer. [4Fe-4S] cluster serves as cofactor. Requires [2Fe-2S] cluster as cofactor.

The catalysed reaction is (4R,5S)-dethiobiotin + (sulfur carrier)-SH + 2 reduced [2Fe-2S]-[ferredoxin] + 2 S-adenosyl-L-methionine = (sulfur carrier)-H + biotin + 2 5'-deoxyadenosine + 2 L-methionine + 2 oxidized [2Fe-2S]-[ferredoxin]. The protein operates within cofactor biosynthesis; biotin biosynthesis; biotin from 7,8-diaminononanoate: step 2/2. Catalyzes the conversion of dethiobiotin (DTB) to biotin by the insertion of a sulfur atom into dethiobiotin via a radical-based mechanism. This chain is Biotin synthase, found in Wolinella succinogenes (strain ATCC 29543 / DSM 1740 / CCUG 13145 / JCM 31913 / LMG 7466 / NCTC 11488 / FDC 602W) (Vibrio succinogenes).